A 359-amino-acid chain; its full sequence is Small ribosomal subunit protein mS22 (359 aa).

Residues Arg40–Lys65 form a disordered region. Phosphoserine is present on Ser54. N6-acetyllysine is present on Lys210.

This sequence belongs to the mitochondrion-specific ribosomal protein mS22 family. In terms of assembly, component of the mitochondrial ribosome small subunit (28S) which comprises a 12S rRNA and about 30 distinct proteins.

It localises to the mitochondrion. The polypeptide is Small ribosomal subunit protein mS22 (Mrps22) (Mus musculus (Mouse)).